An 88-amino-acid chain; its full sequence is MANSKSAKKRALQSEKRRQHNASRRSMLRTYVKRVIAAIKSGDHKAATEAFAIAQPIVDRMATKGLIHKNKAGRQKARLNAKIKAIAA.

The interval Met-1 to Met-27 is disordered.

Belongs to the bacterial ribosomal protein bS20 family.

Binds directly to 16S ribosomal RNA. In Shewanella frigidimarina (strain NCIMB 400), this protein is Small ribosomal subunit protein bS20.